A 137-amino-acid chain; its full sequence is Keratin-associated protein 15-1 (137 aa).

The protein belongs to the PMG family. As to quaternary structure, interacts with hair keratins.

In the hair cortex, hair keratin intermediate filaments are embedded in an interfilamentous matrix, consisting of hair keratin-associated proteins (KRTAP), which are essential for the formation of a rigid and resistant hair shaft through their extensive disulfide bond cross-linking with abundant cysteine residues of hair keratins. The matrix proteins include the high-sulfur and high-glycine-tyrosine keratins. The sequence is that of Keratin-associated protein 15-1 (KRTAP15-1) from Homo sapiens (Human).